A 1616-amino-acid polypeptide reads, in one-letter code: Protein Shroom2 (1616 aa).

In terms of domain architecture, PDZ spans 26–108 (LVEVQLSGGA…TLKLVVKRRS (83 aa)). 2 disordered regions span residues 128–159 (ELAA…LSSS) and 183–229 (HPSS…KADT). The segment covering 150–159 (SSSSHDLSSS) has biased composition (low complexity). Composition is skewed to polar residues over residues 186–197 (SRLSVAKSNSSI) and 220–229 (PDHTLSKADT). The residue at position 231 (Ser231) is a Phosphoserine. The span at 247-259 (QGGRQAQAAGDPQ) shows a compositional bias: low complexity. Disordered stretches follow at residues 247-475 (QGGR…SGWQ), 502-678 (GALE…PLAG), 695-790 (TSFK…SEDT), 802-869 (EETS…LPRR), 881-1100 (KEQR…PSPA), 1115-1184 (PSVF…LTDK), 1268-1302 (AEPE…PGLS), and 1363-1389 (QRRK…VPAA). Over residues 312-321 (SSPPPPPPPL) the composition is skewed to pro residues. Phosphoserine is present on residues Ser313 and Ser325. The span at 343-356 (AAAAQHFTALAQAQ) shows a compositional bias: low complexity. The segment covering 358-370 (RGDRRPELTDRPW) has biased composition (basic and acidic residues). Low complexity predominate over residues 405 to 415 (SSRLQASLSSS). Position 413 is a phosphoserine (Ser413). Positions 684 to 773 (LKEAQARVLR…SEPEKMNEVG (90 aa)) constitute an ASD1 domain. Composition is skewed to basic and acidic residues over residues 754-770 (FTAE…EKMN) and 821-830 (IPRDKPERPR). The span at 842–854 (WSRTTSLGDSLNA) shows a compositional bias: polar residues. Ser851, Ser897, Ser921, Ser922, and Ser924 each carry phosphoserine. Phosphothreonine is present on Thr925. Over residues 926–958 (DHYKQEASVELRRQAGDPGEPREELPSAVRAEE) the composition is skewed to basic and acidic residues. Residue Ser974 is modified to Phosphoserine. The span at 975–994 (PGSQQHPPSQKAPNPPTFSE) shows a compositional bias: polar residues. Ser1036 and Ser1039 each carry phosphoserine. The segment covering 1068–1077 (PKREPRRYRA) has biased composition (basic and acidic residues). Polar residues predominate over residues 1159 to 1176 (LRLQTATMETSRSPSPQF). A phosphoserine mark is found at Ser1171, Ser1173, and Ser1297. The region spanning 1317-1611 (EELAREIVGK…QLKCLLDSLQ (295 aa)) is the ASD2 domain.

This sequence belongs to the shroom family. In terms of assembly, interacts with F-actin. Abundant in retina and melanoma; also in brain, placenta, lung, kidney and pancreas.

It is found in the apical cell membrane. The protein localises to the cell junction. It localises to the tight junction. The protein resides in the cytoplasm. Its subcellular location is the cytoskeleton. May be involved in endothelial cell morphology changes during cell spreading. In the retinal pigment epithelium, may regulate the biogenesis of melanosomes and promote their association with the apical cell surface by inducing gamma-tubulin redistribution. This is Protein Shroom2 (SHROOM2) from Homo sapiens (Human).